The sequence spans 517 residues: Argininosuccinate lyase, chloroplastic (517 aa).

Residues 1–45 constitute a chloroplast transit peptide; sequence MGAIDLSFSQSLLFSSSRSNLSSSTHRSVSFLPPGSKSRCLPPLR. 2-(N(omega)-L-arginino)succinate-binding residues include S79, N166, and T211. H212 (proton acceptor) is an active-site residue. The active-site Proton donor is S333. 2-(N(omega)-L-arginino)succinate is bound by residues N341, Y373, Q378, and K381.

This sequence belongs to the lyase 1 family. Argininosuccinate lyase subfamily.

Its subcellular location is the plastid. It is found in the chloroplast. The enzyme catalyses 2-(N(omega)-L-arginino)succinate = fumarate + L-arginine. It functions in the pathway amino-acid biosynthesis; L-arginine biosynthesis; L-arginine from L-ornithine and carbamoyl phosphate: step 3/3. This chain is Argininosuccinate lyase, chloroplastic, found in Arabidopsis thaliana (Mouse-ear cress).